The sequence spans 25 residues: ATP-dependent 6-phosphofructokinase 2 (25 aa).

Position 11 (Gly11) interacts with ATP.

The protein belongs to the phosphofructokinase type A (PFKA) family. ATP-dependent PFK group I subfamily. Prokaryotic clade 'B1' sub-subfamily. As to quaternary structure, homotetramer. It depends on Mg(2+) as a cofactor.

It is found in the cytoplasm. The catalysed reaction is beta-D-fructose 6-phosphate + ATP = beta-D-fructose 1,6-bisphosphate + ADP + H(+). It participates in carbohydrate degradation; glycolysis; D-glyceraldehyde 3-phosphate and glycerone phosphate from D-glucose: step 3/4. Its activity is regulated as follows. In contrast with PFK1 this enzyme is not affected by phosphoenolpyruvate. Catalyzes the phosphorylation of D-fructose 6-phosphate to fructose 1,6-bisphosphate by ATP, the first committing step of glycolysis. The protein is ATP-dependent 6-phosphofructokinase 2 (pfkA2) of Thermus thermophilus (strain ATCC 27634 / DSM 579 / HB8).